Reading from the N-terminus, the 367-residue chain is Adenine deaminase (367 aa).

Zn(2+)-binding residues include His-19, His-21, and His-209. The Proton donor role is filled by Glu-212. Residue Asp-290 coordinates Zn(2+). A substrate-binding site is contributed by Asp-291.

The protein belongs to the metallo-dependent hydrolases superfamily. Adenosine and AMP deaminases family. Adenine deaminase type 2 subfamily. Zn(2+) serves as cofactor.

Its subcellular location is the cytoplasm. The protein resides in the nucleus. It carries out the reaction adenine + H2O + H(+) = hypoxanthine + NH4(+). Functionally, catalyzes the hydrolytic deamination of adenine to hypoxanthine. Plays an important role in the purine salvage pathway and in nitrogen catabolism. Also exhibits a low activity towards N(6)-substituted adenines that are commonly known as the plant hormones cytokinins. This Schizosaccharomyces pombe (strain 972 / ATCC 24843) (Fission yeast) protein is Adenine deaminase.